Reading from the N-terminus, the 341-residue chain is UDP-3-O-acylglucosamine N-acyltransferase (341 aa).

Histidine 241 serves as the catalytic Proton acceptor.

This sequence belongs to the transferase hexapeptide repeat family. LpxD subfamily. As to quaternary structure, homotrimer.

The enzyme catalyses a UDP-3-O-[(3R)-3-hydroxyacyl]-alpha-D-glucosamine + a (3R)-hydroxyacyl-[ACP] = a UDP-2-N,3-O-bis[(3R)-3-hydroxyacyl]-alpha-D-glucosamine + holo-[ACP] + H(+). The protein operates within bacterial outer membrane biogenesis; LPS lipid A biosynthesis. Its function is as follows. Catalyzes the N-acylation of UDP-3-O-acylglucosamine using 3-hydroxyacyl-ACP as the acyl donor. Is involved in the biosynthesis of lipid A, a phosphorylated glycolipid that anchors the lipopolysaccharide to the outer membrane of the cell. This Christiangramia forsetii (strain DSM 17595 / CGMCC 1.15422 / KT0803) (Gramella forsetii) protein is UDP-3-O-acylglucosamine N-acyltransferase.